The sequence spans 92 residues: Signal recognition particle 19 kDa protein (92 aa).

This sequence belongs to the SRP19 family. In terms of assembly, part of the signal recognition particle protein translocation system, which is composed of SRP and FtsY. Archaeal SRP consists of a 7S RNA molecule of 300 nucleotides and two protein subunits: SRP54 and SRP19.

The protein resides in the cytoplasm. In terms of biological role, involved in targeting and insertion of nascent membrane proteins into the cytoplasmic membrane. Binds directly to 7S RNA and mediates binding of the 54 kDa subunit of the SRP. This Methanosphaera stadtmanae (strain ATCC 43021 / DSM 3091 / JCM 11832 / MCB-3) protein is Signal recognition particle 19 kDa protein.